The primary structure comprises 1916 residues: Endoribonuclease Dicer (1916 aa).

The Helicase ATP-binding domain maps to 51-227 (LLEAALDHNT…ELEEKIQKLE (177 aa)). 64–71 (LNTGSGKT) contacts ATP. Positions 175 to 178 (DECH) match the DECH box motif. The tract at residues 256–595 (DCGPFTDRSG…LRNKCSKSAD (340 aa)) is required for interaction with PRKRA and TARBP2. Residues 409 to 433 (YVSWSDSEDDDDDEEIEEKEKPETN) form a disordered region. Phosphoserine is present on residues serine 413 and serine 415. Residues 414–425 (DSEDDDDDEEIE) are compositionally biased toward acidic residues. The region spanning 433-602 (NFPSPFTNIL…SADGAEADVH (170 aa)) is the Helicase C-terminal domain. Positions 630–722 (AIGHINRYCA…MPVGKETVKY (93 aa)) constitute a Dicer dsRNA-binding fold domain. Residues 726-745 (LDLHDEEETSVPGRPGSTKR) form a disordered region. One can recognise a PAZ domain in the interval 895–1042 (KFMEDIEKSE…LVPELCAIHP (148 aa)). Serine 1016 and serine 1160 each carry phosphoserine. The RNase III 1 domain occupies 1276 to 1403 (DSEQSPSVGY…SEKWEKDEMT (128 aa)). Mg(2+) contacts are provided by glutamate 1316, glutamate 1395, and glutamate 1398. Residues serine 1456, serine 1464, and serine 1466 each carry the phosphoserine modification. The interval 1598–1626 (ALDPAQENGSSQQKSLSGSCAAPVGPRSS) is disordered. A compositionally biased stretch (polar residues) spans 1604 to 1615 (ENGSSQQKSLSG). The RNase III 2 domain occupies 1660–1818 (FETFEKKINY…LAGAIYMDSG (159 aa)). Mg(2+) contacts are provided by glutamate 1699, aspartate 1804, and glutamate 1807. In terms of domain architecture, DRBM spans 1843-1908 (VPRSPVRELL…ARRALRSLKA (66 aa)). Serine 1862 bears the Phosphoserine mark.

This sequence belongs to the helicase family. Dicer subfamily. Component of the RISC loading complex (RLC), or micro-RNA (miRNA) loading complex (miRLC), which is composed of DICER1, AGO2 and TARBP2; DICER1 and TARBP2 are required to process precursor miRNAs (pre-miRNAs) to mature miRNAs and then load them onto AGO2. Note that the trimeric RLC/miRLC is also referred to as RISC. Interacts with DHX9, AGO1, PIWIL1 and PRKRA. Interacts with AGO2, TARBP2, EIF6, MOV10 and RPL7A (60S ribosome subunit); they form a large RNA-induced silencing complex (RISC). Interacts with BCDIN3D. Interacts (via Dicer dsRNA-binding fold domain) with ALOX5 (via PLAT domain); this interaction enhances arachidonate 5-lipoxygenase activity and modifies the miRNA precursor processing activity of DICER1. Mg(2+) serves as cofactor. Mn(2+) is required as a cofactor. Isoform 1 is expressed in a wide variety of tissues. Isoform 2 is specifically expressed in oocytes during their growth (at protein level).

The protein resides in the cytoplasm. The enzyme catalyses Endonucleolytic cleavage to 5'-phosphomonoester.. In terms of biological role, double-stranded RNA (dsRNA) endoribonuclease playing a central role in short dsRNA-mediated post-transcriptional gene silencing. Cleaves naturally occurring long dsRNAs and short hairpin pre-microRNAs (miRNA) into fragments of twenty-one to twenty-three nucleotides with 3' overhang of two nucleotides, producing respectively short interfering RNAs (siRNA) and mature microRNAs. SiRNAs and miRNAs serve as guide to direct the RNA-induced silencing complex (RISC) to complementary RNAs to degrade them or prevent their translation. Gene silencing mediated by siRNAs, also called RNA interference, controls the elimination of transcripts from mobile and repetitive DNA elements of the genome but also the degradation of exogenous RNA of viral origin for instance. The miRNA pathway on the other side is a mean to specifically regulate the expression of target genes. Its function is as follows. More active than isoform 1 to process long double-stranded RNA into siRNAs. Responsible for the accumulation of endogenous siRNAs observed in mouse oocytes compared to somatic cells and it regulates meiotic spindle organization in female germline. The protein is Endoribonuclease Dicer (Dicer1) of Mus musculus (Mouse).